A 330-amino-acid polypeptide reads, in one-letter code: L-tryptophan isonitrile synthase AmbI2 (330 aa).

It belongs to the isocyanide synthase family.

The catalysed reaction is D-ribulose 5-phosphate + L-tryptophan = (2S)-3-(1H-indol-3-yl)-2-isocyanopropanoate + hydroxyacetone + formaldehyde + phosphate + H2O + H(+). Its function is as follows. Involved in the biosynthesis of ambiguines, a family of hapalindole-type alkaloids. Responsible for the synthesis of the isonitrile group on tryptophan using ribulose 5-phosphate as the source of the carbon atom. In Fischerella ambigua (strain UTEX 1903), this protein is L-tryptophan isonitrile synthase AmbI2.